The primary structure comprises 428 residues: 3-phosphoshikimate 1-carboxyvinyltransferase (428 aa).

3-phosphoshikimate-binding residues include Lys-22, Ser-23, and Arg-27. Lys-22 is a phosphoenolpyruvate binding site. 2 residues coordinate phosphoenolpyruvate: Gly-96 and Arg-124. Residues Ser-169, Ser-170, Gln-171, Ser-197, Asp-313, Asn-336, and Lys-340 each contribute to the 3-phosphoshikimate site. Gln-171 contacts phosphoenolpyruvate. The active-site Proton acceptor is the Asp-313. Phosphoenolpyruvate contacts are provided by Arg-344, Arg-386, and Lys-411.

This sequence belongs to the EPSP synthase family. As to quaternary structure, monomer.

Its subcellular location is the cytoplasm. It catalyses the reaction 3-phosphoshikimate + phosphoenolpyruvate = 5-O-(1-carboxyvinyl)-3-phosphoshikimate + phosphate. It participates in metabolic intermediate biosynthesis; chorismate biosynthesis; chorismate from D-erythrose 4-phosphate and phosphoenolpyruvate: step 6/7. Functionally, catalyzes the transfer of the enolpyruvyl moiety of phosphoenolpyruvate (PEP) to the 5-hydroxyl of shikimate-3-phosphate (S3P) to produce enolpyruvyl shikimate-3-phosphate and inorganic phosphate. In Xenorhabdus nematophila (strain ATCC 19061 / DSM 3370 / CCUG 14189 / LMG 1036 / NCIMB 9965 / AN6), this protein is 3-phosphoshikimate 1-carboxyvinyltransferase.